The primary structure comprises 59 residues: Large ribosomal subunit protein bL32 (59 aa).

Positions M1–E59 are disordered. Over residues R49–E59 the composition is skewed to basic residues.

Belongs to the bacterial ribosomal protein bL32 family.

In Methylobacillus flagellatus (strain ATCC 51484 / DSM 6875 / VKM B-1610 / KT), this protein is Large ribosomal subunit protein bL32.